The sequence spans 438 residues: Coenzyme A disulfide reductase (438 aa).

An FAD-binding site is contributed by 8 to 33 (GAVAGGATCASQIRRLDKESDIIIFE). Residues T15, Q19, R22, S39, and N42 each coordinate substrate. The Nucleophile role is filled by C43. The active-site Redox-active is the C43. K71 provides a ligand contact to substrate. 151-166 (VLVVGAGYVSLEVLEN) lines the NADP(+) pocket. 267–277 (TNVPNIYAIGD) contacts FAD. A substrate-binding site is contributed by H299. FAD is bound at residue Y419. Substrate is bound at residue K427.

This sequence belongs to the class-III pyridine nucleotide-disulfide oxidoreductase family. In terms of assembly, homodimer. Requires FAD as cofactor.

It catalyses the reaction NADP(+) + 2 CoA = CoA-disulfide + NADPH + H(+). Functionally, catalyzes specifically the NADPH-dependent reduction of coenzyme A disulfide. The sequence is that of Coenzyme A disulfide reductase from Staphylococcus aureus (strain COL).